Reading from the N-terminus, the 360-residue chain is Decorin (360 aa).

Positions 1-16 are cleaved as a signal peptide; sequence MKATIIFLLLAQVSWA. Residues 17-30 constitute a propeptide that is removed on maturation; it reads GPFQQRGLFDFMLE. Serine 34 is a glycosylation site (O-linked (Xyl...) (glycosaminoglycan) serine). 2 disulfide bridges follow: cysteine 55/cysteine 61 and cysteine 59/cysteine 68. 12 LRR repeats span residues 74–94, 95–118, 119–142, 143–163, 164–187, 188–213, 214–234, 235–258, 259–282, 283–305, 306–335, and 336–360; these read DKVPKDLPPDTTLLDLQNNKI, TEIKDGDFKNLKNLHALILVNNKI, SKISPGAFTPLVKLERLYLSKNHL, KELPEKMPKTLQELRVHENEI, TKVRKAVFNGLNQMIVVELGTNPL, KSSGIENGAFQGMKKLSYIRIADTNI, TTIPPGLPPSLTELHLDGNKI, TKVDAASLRGLNNLAKLGLSFNSI, SAVDNGSLANTPHLRELHLDNNKL, IKVPGGLADHKYIQVVYLHNNNI, SAVGSNDFCPPGYNTKKASYSGVSLFSNPV, and QYWEIQPSTFRCVYVRSAIQLGNYK. Asparagine 212 carries N-linked (GlcNAc...) asparagine glycosylation. 2 N-linked (GlcNAc...) asparagine glycosylation sites follow: asparagine 263 and asparagine 304. A disulfide bridge connects residues cysteine 314 and cysteine 347.

This sequence belongs to the small leucine-rich proteoglycan (SLRP) family. SLRP class I subfamily. As to quaternary structure, binds to type I and type II collagen, fibronectin and TGF-beta. Forms a ternary complex with MFAP2 and ELN. Interacts with DPT. Post-translationally, the attached glycosaminoglycan chain can be either chondroitin sulfate or dermatan sulfate depending upon the tissue of origin.

It is found in the secreted. The protein resides in the extracellular space. Its subcellular location is the extracellular matrix. Functionally, may affect the rate of fibrils formation. The chain is Decorin (DCN) from Equus caballus (Horse).